The following is a 123-amino-acid chain: Small ribosomal subunit protein uS12 (123 aa).

Aspartate 89 is subject to 3-methylthioaspartic acid.

This sequence belongs to the universal ribosomal protein uS12 family. In terms of assembly, part of the 30S ribosomal subunit. Contacts proteins S8 and S17. May interact with IF1 in the 30S initiation complex.

Its function is as follows. With S4 and S5 plays an important role in translational accuracy. In terms of biological role, interacts with and stabilizes bases of the 16S rRNA that are involved in tRNA selection in the A site and with the mRNA backbone. Located at the interface of the 30S and 50S subunits, it traverses the body of the 30S subunit contacting proteins on the other side and probably holding the rRNA structure together. The combined cluster of proteins S8, S12 and S17 appears to hold together the shoulder and platform of the 30S subunit. The sequence is that of Small ribosomal subunit protein uS12 from Anaeromyxobacter dehalogenans (strain 2CP-1 / ATCC BAA-258).